The chain runs to 41 residues: MKDFTTYLSTAPVVAFAWITITAGLLIEINRFFPDPLVFSF.

A helical transmembrane segment spans residues 7-27; that stretch reads YLSTAPVVAFAWITITAGLLI.

This sequence belongs to the PsaJ family.

It is found in the plastid. It localises to the chloroplast thylakoid membrane. Its function is as follows. May help in the organization of the PsaE and PsaF subunits. This Oedogonium cardiacum (Filamentous green alga) protein is Photosystem I reaction center subunit IX.